The chain runs to 327 residues: Nucleotide-binding protein CYB_0992 (327 aa).

12-19 (GLTGAGKT) lines the ATP pocket.

This sequence belongs to the RapZ-like family.

Its function is as follows. Displays ATPase and GTPase activities. This chain is Nucleotide-binding protein CYB_0992, found in Synechococcus sp. (strain JA-2-3B'a(2-13)) (Cyanobacteria bacterium Yellowstone B-Prime).